We begin with the raw amino-acid sequence, 317 residues long: Transaldolase (317 aa).

Lys132 serves as the catalytic Schiff-base intermediate with substrate.

It belongs to the transaldolase family. Type 1 subfamily. In terms of assembly, homodimer.

It is found in the cytoplasm. The catalysed reaction is D-sedoheptulose 7-phosphate + D-glyceraldehyde 3-phosphate = D-erythrose 4-phosphate + beta-D-fructose 6-phosphate. The protein operates within carbohydrate degradation; pentose phosphate pathway; D-glyceraldehyde 3-phosphate and beta-D-fructose 6-phosphate from D-ribose 5-phosphate and D-xylulose 5-phosphate (non-oxidative stage): step 2/3. Its function is as follows. Transaldolase is important for the balance of metabolites in the pentose-phosphate pathway. The sequence is that of Transaldolase from Histophilus somni (strain 129Pt) (Haemophilus somnus).